The sequence spans 206 residues: Pyrrolidone-carboxylate peptidase (206 aa).

Catalysis depends on residues glutamate 78, cysteine 141, and histidine 165.

This sequence belongs to the peptidase C15 family. In terms of assembly, homotetramer.

It localises to the cytoplasm. It catalyses the reaction Release of an N-terminal pyroglutamyl group from a polypeptide, the second amino acid generally not being Pro.. In terms of biological role, removes 5-oxoproline from various penultimate amino acid residues except L-proline. The chain is Pyrrolidone-carboxylate peptidase from Thermococcus kodakarensis (strain ATCC BAA-918 / JCM 12380 / KOD1) (Pyrococcus kodakaraensis (strain KOD1)).